The primary structure comprises 208 residues: 2-phospho-L-lactate guanylyltransferase (208 aa).

This sequence belongs to the CofC family. As to quaternary structure, homodimer.

It carries out the reaction (2S)-2-phospholactate + GTP + H(+) = (2S)-lactyl-2-diphospho-5'-guanosine + diphosphate. The protein operates within cofactor biosynthesis; coenzyme F420 biosynthesis. Guanylyltransferase that catalyzes the activation of (2S)-2-phospholactate (2-PL) as (2S)-lactyl-2-diphospho-5'-guanosine, via the condensation of 2-PL with GTP. It is involved in the biosynthesis of coenzyme F420, a hydride carrier cofactor. The polypeptide is 2-phospho-L-lactate guanylyltransferase (Methanosarcina barkeri (strain Fusaro / DSM 804)).